The sequence spans 468 residues: 3-isopropylmalate dehydratase large subunit (468 aa).

Positions 349, 409, and 412 each coordinate [4Fe-4S] cluster.

This sequence belongs to the aconitase/IPM isomerase family. LeuC type 1 subfamily. As to quaternary structure, heterodimer of LeuC and LeuD. [4Fe-4S] cluster is required as a cofactor.

It carries out the reaction (2R,3S)-3-isopropylmalate = (2S)-2-isopropylmalate. It participates in amino-acid biosynthesis; L-leucine biosynthesis; L-leucine from 3-methyl-2-oxobutanoate: step 2/4. In terms of biological role, catalyzes the isomerization between 2-isopropylmalate and 3-isopropylmalate, via the formation of 2-isopropylmaleate. This chain is 3-isopropylmalate dehydratase large subunit, found in Shewanella baltica (strain OS155 / ATCC BAA-1091).